We begin with the raw amino-acid sequence, 365 residues long: Ribosomal RNA large subunit methyltransferase F (365 aa).

The interval 1-48 (MSKPAVKSVQSATAKTATRAVNIRQKVKAPKQAKPEGKGSTKPVKDRP) is disordered. Basic and acidic residues predominate over residues 33-48 (AKPEGKGSTKPVKDRP).

The protein belongs to the methyltransferase superfamily. METTL16/RlmF family.

It localises to the cytoplasm. It carries out the reaction adenosine(1618) in 23S rRNA + S-adenosyl-L-methionine = N(6)-methyladenosine(1618) in 23S rRNA + S-adenosyl-L-homocysteine + H(+). In terms of biological role, specifically methylates the adenine in position 1618 of 23S rRNA. This Shewanella baltica (strain OS223) protein is Ribosomal RNA large subunit methyltransferase F.